Consider the following 304-residue polypeptide: Glycine--tRNA ligase alpha subunit (304 aa).

Belongs to the class-II aminoacyl-tRNA synthetase family. As to quaternary structure, tetramer of two alpha and two beta subunits.

Its subcellular location is the cytoplasm. The catalysed reaction is tRNA(Gly) + glycine + ATP = glycyl-tRNA(Gly) + AMP + diphosphate. In Streptococcus agalactiae serotype III (strain NEM316), this protein is Glycine--tRNA ligase alpha subunit.